The primary structure comprises 873 residues: Protein SEY1 (873 aa).

The disordered stretch occupies residues 1-20 (MVANGHFAGSADGQHSSSYE). The Cytoplasmic portion of the chain corresponds to 1 to 749 (MVANGHFAGS…KRSAIGGITQ (749 aa)). Residues 49 to 307 (GFNYHLISVF…IPADGFAVYA (259 aa)) enclose the GB1/RHD3-type G domain. GTP is bound at residue 59–66 (GSQSTGKS). A coiled-coil region spans residues 482-506 (SNYQQELSLYQKDLERTSGQLRRDE). The tract at residues 677 to 703 (DKWIGHTPSSATPADEEDLTPIGGVDD) is disordered. Acidic residues predominate over residues 690–703 (ADEEDLTPIGGVDD). Residues 750–770 (VPLYFYGLLFALGWNEILAVL) form a helical membrane-spanning segment. Residues 771–773 (RNP) are Lumenal-facing. The chain crosses the membrane as a helical span at residues 774-794 (VYFLLLFVCAIGAYITYQLNL). Over 795 to 873 (WGPIIKMTEA…EDVDDDDDDF (79 aa)) the chain is Cytoplasmic. The tract at residues 828–873 (RQAMAMSGARNATEEHEMSRLSRKPAERGGRKNRADEDVDDDDDDF) is disordered. The span at 839-863 (ATEEHEMSRLSRKPAERGGRKNRAD) shows a compositional bias: basic and acidic residues. A compositionally biased stretch (acidic residues) spans 864–873 (EDVDDDDDDF).

The protein belongs to the TRAFAC class dynamin-like GTPase superfamily. GB1/RHD3 GTPase family. RHD3 subfamily.

It localises to the endoplasmic reticulum membrane. In terms of biological role, cooperates with the reticulon proteins and tubule-shaping DP1 family proteins to generate and maintain the structure of the tubular endoplasmic reticulum network. Has GTPase activity, which is required for its function in ER organization. The sequence is that of Protein SEY1 from Ajellomyces capsulatus (strain NAm1 / WU24) (Darling's disease fungus).